A 191-amino-acid chain; its full sequence is Imidazoleglycerol-phosphate dehydratase (191 aa).

The protein belongs to the imidazoleglycerol-phosphate dehydratase family.

Its subcellular location is the cytoplasm. It catalyses the reaction D-erythro-1-(imidazol-4-yl)glycerol 3-phosphate = 3-(imidazol-4-yl)-2-oxopropyl phosphate + H2O. It functions in the pathway amino-acid biosynthesis; L-histidine biosynthesis; L-histidine from 5-phospho-alpha-D-ribose 1-diphosphate: step 6/9. The protein is Imidazoleglycerol-phosphate dehydratase of Thermodesulfovibrio yellowstonii (strain ATCC 51303 / DSM 11347 / YP87).